We begin with the raw amino-acid sequence, 284 residues long: MEMO1 family protein YN1551_0739 (284 aa).

The protein belongs to the MEMO1 family.

This chain is MEMO1 family protein YN1551_0739, found in Saccharolobus islandicus (strain Y.N.15.51 / Yellowstone #2) (Sulfolobus islandicus).